Reading from the N-terminus, the 101-residue chain is NADH-quinone oxidoreductase subunit K (101 aa).

3 helical membrane-spanning segments follow: residues 4–24 (LAHY…GIFL), 29–49 (IIII…NFVA), and 61–81 (IFVF…LAIL).

Belongs to the complex I subunit 4L family. NDH-1 is composed of 14 different subunits. Subunits NuoA, H, J, K, L, M, N constitute the membrane sector of the complex.

Its subcellular location is the cell inner membrane. It carries out the reaction a quinone + NADH + 5 H(+)(in) = a quinol + NAD(+) + 4 H(+)(out). NDH-1 shuttles electrons from NADH, via FMN and iron-sulfur (Fe-S) centers, to quinones in the respiratory chain. The immediate electron acceptor for the enzyme in this species is believed to be ubiquinone. Couples the redox reaction to proton translocation (for every two electrons transferred, four hydrogen ions are translocated across the cytoplasmic membrane), and thus conserves the redox energy in a proton gradient. The sequence is that of NADH-quinone oxidoreductase subunit K from Burkholderia vietnamiensis (strain G4 / LMG 22486) (Burkholderia cepacia (strain R1808)).